We begin with the raw amino-acid sequence, 321 residues long: MKLPLLLAIVTTFSVVASTGPFDPEEMLFTFTRCMEDNLEDGPNRLPMLAKWKEWINEPVDSPATQCFGKCVLVRTGLYDPVAQKFDASVIQEQFKAYPSLGEKSKVEAYANAVQQLPSTNNDCAAVFKAYDPVHKAHKDTSKNLFHGNKELTKGLYEKLGKDIRQKKQSYFEFCENKYYPAGSDKRQQLCKIRQYTVLDDALFKEHTDCVMKGIRYITKNNELDAEEVKRDFMQVNKDTKALEKVLNDCKSKEPSNAGEKSWHYYKCLVESSVKDDFKEAFDYREVRSQIYAFNLPKKQVYSKPAVQSQVMEIDGKQCPQ.

Residues 1–17 form the signal peptide; that stretch reads MKLPLLLAIVTTFSVVA. Intrachain disulfides connect Cys-34/Cys-71 and Cys-67/Cys-124. Trp-55 contacts leukotriene E4. Leukotriene E4 contacts are provided by Gly-148 and Lys-167. 3 cysteine pairs are disulfide-bonded: Cys-175-Cys-210, Cys-191-Cys-319, and Cys-250-Cys-268. Noradrenaline is bound by residues Glu-176, Arg-194, and His-207. Residues Asp-283 and Glu-286 each coordinate noradrenaline.

It belongs to the PBP/GOBP family. (Microbial infection) Interacts with envelope protein of dengue virus type 2. As to expression, saliva (at protein level). Female salivary gland (at protein level). Detected in the head and thorax of the female mosquitoes, where the salivary glands are located. Expressed in the distal-lateral and medial lobes of the female salivary gland but not in the carcass. No or low-level expression in the adult male mosquito tissues.

The protein localises to the secreted. In terms of biological role, modulates blood feeding of female mosquitoes on vertebrate species by binding and sequestering different mediators involved in the host response, such as biogenic amines and eicosanoids. Binds serotonin, histamine, leukotriene B4, leukotriene C4, leukotriene D4, leukotriene E4, adrenaline and noradrenaline. Does not bind tryptamine and U-46619, a stable analog of thromboxane A2. Exhibits vasodilating activity. Inhibits agonist-induced platelet aggregation but not blood clotting. Inhibits noradrenaline-induced smooth muscle contraction. Promotes an influx of host neutrophils at the inoculation site. Its function is as follows. (Microbial infection) Probably promotes Plasmodium gallinaceum oocyst development in mosquito midgut. Functionally, (Microbial infection) Exhibits antiviral activity against dengue virus type 2 probably through a direct interaction with dengue virus virions. The sequence is that of Long form salivary protein D7L1 (D7) from Aedes aegypti (Yellowfever mosquito).